Here is a 336-residue protein sequence, read N- to C-terminus: Probable magnesium transporter NIPA2 (336 aa).

At 1–7 (MEEMSPD) the chain is on the extracellular side. Residues 8–28 (NIHGVILAVSSSIFIGSSFII) form a helical membrane-spanning segment. Residues 29–55 (KKKGLKKAGVSGARAGEGGYGYLYEPW) are Cytoplasmic-facing. The helical transmembrane segment at 56–76 (WWAGMITMIVGEIANFAAYAF) threads the bilayer. The Extracellular portion of the chain corresponds to 77–79 (APA). A helical membrane pass occupies residues 80 to 100 (ILVTPLGALSIIFSAVLAHFI). At 101-104 (LEEK) the chain is on the cytoplasmic side. Residues 105–125 (LHMFGILGCVLCVVGSTTIVL) traverse the membrane as a helical segment. Over 126-145 (HAPHEQGIESVKQVWHLATE) the chain is Extracellular. A helical transmembrane segment spans residues 146 to 166 (PGFLAYSAVVLVVVLALIFYY). Residues 167 to 179 (EPRYGKTHMIVYV) lie on the Cytoplasmic side of the membrane. A helical membrane pass occupies residues 180 to 200 (GICSLMGSLTVMSVKAVAIAI). At 201–212 (KLTFSGMNQFKY) the chain is on the extracellular side. A helical membrane pass occupies residues 213–233 (FHAWIFIIVVTICCILQINYL). The Cytoplasmic segment spans residues 234-244 (NKALDNFNTAV). The chain crosses the membrane as a helical span at residues 245–265 (ISPVYYVMFTTFTILASMIMF). The Extracellular portion of the chain corresponds to 266 to 272 (KDWASQS). A helical membrane pass occupies residues 273–293 (GLQIATELCGFVTILSGTFLL). Topologically, residues 294–336 (HKTKDMGNSTSLRGSTSHSPRDTPVFINSGSSRSSNSTRPAIL) are cytoplasmic. The interval 303–336 (TSLRGSTSHSPRDTPVFINSGSSRSSNSTRPAIL) is disordered. A compositionally biased stretch (low complexity) spans 321–330 (NSGSSRSSNS).

This sequence belongs to the NIPA (TC 2.A.7) family. Homodimer.

The protein resides in the cell membrane. The protein localises to the early endosome. Its function is as follows. Acts as a Mg(2+) transporter. Can also transport other divalent cations such as Fe(2+), Sr(2+), Ba(2+), Mn(2+) and Co(2+) but to a much less extent than Mg(2+). The protein is Probable magnesium transporter NIPA2 of Arabidopsis thaliana (Mouse-ear cress).